The sequence spans 240 residues: Homeobox protein goosecoid (240 aa).

Residues 146-205 (KRRHRTIFTDEQLEALENLFQETKYPDVGTREQLARKVHLREEKVEVWFKNRRAKWRRQK) constitute a DNA-binding region (homeobox). Residues 199–240 (AKWRRQKRSSSEESENSQKWNKSTKTTSEKIEEGKSDVDSDS) are disordered. The span at 225–240 (TSEKIEEGKSDVDSDS) shows a compositional bias: basic and acidic residues.

It belongs to the paired homeobox family. Bicoid subfamily.

The protein localises to the nucleus. The protein is Homeobox protein goosecoid (gsc) of Danio rerio (Zebrafish).